The primary structure comprises 285 residues: uncharacterized protein (285 aa).

6 consecutive transmembrane segments (helical) span residues 7–29 (FYRL…LTLQ), 49–71 (LVVW…STFF), 95–117 (IFLY…SNTL), 137–156 (FFSE…VLHA), 232–254 (KVVN…TVAL), and 259–281 (GGLS…IFVV).

Its subcellular location is the cell membrane. This is an uncharacterized protein from Aquifex aeolicus (strain VF5).